We begin with the raw amino-acid sequence, 188 residues long: MKVLFATGNIGKYHEAKQILARYGIEVERVDLDYPELQSDSLEEIAAYGARYCAESLGQPVIVEDSGLFIEALNGFPGPYSAYVFDTIGNEGILKLLEGEENRKAEFISVVGYCEPGGRPVTFTGEIRGRIAEEPRGEEGFGYDPIFIPEGEDSTFAELGVEEKCKISHRTKALERFAEWYKNNVAGR.

7–12 contributes to the substrate binding site; it reads TGNIGK. The Mg(2+) site is built by E36 and D65. Catalysis depends on D65, which acts as the Proton acceptor. Residues S66, 141–144, K164, and 169–170 each bind substrate; these read FGYD and HR.

This sequence belongs to the HAM1 NTPase family. As to quaternary structure, homodimer. Mg(2+) serves as cofactor.

It carries out the reaction XTP + H2O = XMP + diphosphate + H(+). The catalysed reaction is dITP + H2O = dIMP + diphosphate + H(+). The enzyme catalyses ITP + H2O = IMP + diphosphate + H(+). In terms of biological role, pyrophosphatase that catalyzes the hydrolysis of nucleoside triphosphates to their monophosphate derivatives, with a high preference for the non-canonical purine nucleotides XTP (xanthosine triphosphate), dITP (deoxyinosine triphosphate) and ITP. Seems to function as a house-cleaning enzyme that removes non-canonical purine nucleotides from the nucleotide pool, thus preventing their incorporation into DNA/RNA and avoiding chromosomal lesions. The protein is dITP/XTP pyrophosphatase of Methanopyrus kandleri (strain AV19 / DSM 6324 / JCM 9639 / NBRC 100938).